The following is a 130-amino-acid chain: DNA-directed RNA polymerase subunit omega (130 aa).

2 disordered regions span residues 80-99 (PEPD…DADD) and 110-130 (EELL…EEDE). The segment covering 110 to 124 (EELLKGLEGLAPREE) has biased composition (basic and acidic residues).

It belongs to the RNA polymerase subunit omega family. As to quaternary structure, the RNAP catalytic core consists of 2 alpha, 1 beta, 1 beta' and 1 omega subunit. When a sigma factor is associated with the core the holoenzyme is formed, which can initiate transcription.

It carries out the reaction RNA(n) + a ribonucleoside 5'-triphosphate = RNA(n+1) + diphosphate. Functionally, promotes RNA polymerase assembly. Latches the N- and C-terminal regions of the beta' subunit thereby facilitating its interaction with the beta and alpha subunits. The polypeptide is DNA-directed RNA polymerase subunit omega (Nitrobacter hamburgensis (strain DSM 10229 / NCIMB 13809 / X14)).